Here is a 378-residue protein sequence, read N- to C-terminus: MASETEKLLCLNTESAEIPADFVELLPPDNIGDIEAVSLETSVGQTIEVYGDVGVDWAHGSQYHSPVIALQPLVGSSLSSRDHDKEMFVVQTREEEVVGYQDSDNLLFSPEFGSQMVLPVNEDDYLQPTTASFTGFLAAENGQGELSPYEGNLCGLTTFIEAGAEESVNADLGDKQWEQKQIDGLDGEFPFTMWDDVNEKEDPIAEEQAGESPPDYSEYMTGKKFPPEGIPGIDLSDPKQLAEFTSMRPKKPKGDFPRPIACSHKGCEKMFKDNSAMRKHLHIHGPRVHVCAECGKAFVESSKLKRHQLVHTGEKPYQCTFEGCGRRFSLDFNLRTHVRIHTGDKPFVCPFDACNKKFAQSTNLKSHILTHVKNKNDQ.

Residues 39-113 are mediates transcriptional activation; sequence LETSVGQTIE…DNLLFSPEFG (75 aa). Residues 243–378 are mediates transcriptional repression; it reads EFTSMRPKKP…LTHVKNKNDQ (136 aa). 4 consecutive C2H2-type zinc fingers follow at residues 260 to 284, 289 to 311, 317 to 341, and 347 to 371; these read IACS…LHIH, HVCA…QLVH, YQCT…VRIH, and FVCP…ILTH.

Belongs to the YY transcription factor family. Weakly expressed by neuronal and glial cells in the cerebral cortex. Expressed by Purkinje cells and in the granular layers of the cerebellum. Expressed in all layers of spermatocytes in testis but not detected in sperm cells.

The protein localises to the nucleus. Functions as a multifunctional transcription factor that may exhibit positive and negative control on a large number of genes. May antagonize YY1 and function in development and differentiation. The protein is Transcription factor YY2 (Yy2) of Mus musculus (Mouse).